Here is a 210-residue protein sequence, read N- to C-terminus: Glycerol-3-phosphate acyltransferase 2 (210 aa).

The next 6 membrane-spanning stretches (helical) occupy residues 4-24 (LIMV…PAPY), 54-74 (FWPG…AMAV), 82-102 (LGIQ…PVWL), 114-134 (IGIL…CFLV), 141-161 (FPTL…WLGQ), and 163-183 (DLGK…MYIP).

It belongs to the PlsY family. As to quaternary structure, probably interacts with PlsX.

It localises to the cell membrane. It carries out the reaction an acyl phosphate + sn-glycerol 3-phosphate = a 1-acyl-sn-glycero-3-phosphate + phosphate. It functions in the pathway lipid metabolism; phospholipid metabolism. Catalyzes the transfer of an acyl group from acyl-phosphate (acyl-PO(4)) to glycerol-3-phosphate (G3P) to form lysophosphatidic acid (LPA). This enzyme utilizes acyl-phosphate as fatty acyl donor, but not acyl-CoA or acyl-ACP. In Dehalococcoides mccartyi (strain ATCC BAA-2266 / KCTC 15142 / 195) (Dehalococcoides ethenogenes (strain 195)), this protein is Glycerol-3-phosphate acyltransferase 2.